The sequence spans 206 residues: Probable 5-formyltetrahydrofolate cyclo-ligase (206 aa).

Residues 8–12 and arginine 12 contribute to the ATP site; that span reads KSELR. Substrate-binding positions include valine 54, glutamate 59, and 146–150; that span reads HGKGY. 143 to 151 is a binding site for ATP; that stretch reads RCGHGKGYY. Residues aspartate 152 and aspartate 188 each coordinate Mg(2+).

Belongs to the 5-formyltetrahydrofolate cyclo-ligase family. As to quaternary structure, monomer. The cofactor is Mg(2+).

The protein localises to the cytoplasm. The enzyme catalyses (6S)-5-formyl-5,6,7,8-tetrahydrofolate + ATP = (6R)-5,10-methenyltetrahydrofolate + ADP + phosphate. Its function is as follows. Contributes to tetrahydrofolate metabolism. Helps regulate carbon flow through the folate-dependent one-carbon metabolic network that supplies carbon for the biosynthesis of purines, thymidine and amino acids. Catalyzes the irreversible conversion of 5-formyltetrahydrofolate (5-CHO-H(4)PteGlu) to yield 5,10-methenyltetrahydrofolate. The sequence is that of Probable 5-formyltetrahydrofolate cyclo-ligase from Caenorhabditis elegans.